The sequence spans 88 residues: Small ribosomal subunit protein uS17 (88 aa).

The protein belongs to the universal ribosomal protein uS17 family. Part of the 30S ribosomal subunit.

One of the primary rRNA binding proteins, it binds specifically to the 5'-end of 16S ribosomal RNA. This chain is Small ribosomal subunit protein uS17, found in Prochlorococcus marinus (strain MIT 9215).